Reading from the N-terminus, the 78-residue chain is Surfactant-associated protein 2 (78 aa).

An N-terminal signal peptide occupies residues 1 to 19 (MGSGLPLVLLLTLLGSSHG). N-linked (GlcNAc...) asparagine glycosylation is present at N37.

N-glycosylated. As to expression, predominantly expressed in lung, where it is detected in type II pneumocytes in the alveolus, and in nonciliated epithelium in bronchioli (at protein level). Also detected at lower levels in cervix, esophagus, stomach, testis and kidney.

It is found in the secreted. Its subcellular location is the cytoplasmic vesicle. It localises to the secretory vesicle. The protein resides in the golgi apparatus. Functionally, putative surfactant protein. This is Surfactant-associated protein 2 (SFTA2) from Homo sapiens (Human).